Reading from the N-terminus, the 655-residue chain is Protein-glucosylgalactosylhydroxylysine glucosidase (655 aa).

258–259 (WD) contributes to the substrate binding site. E388 functions as the Proton donor in the catalytic mechanism. 456–457 (KQ) contacts substrate.

This sequence belongs to the glycosyl hydrolase 65 family.

The enzyme catalyses (5R)-5-O-[alpha-D-glucosyl-(1-&gt;2)-beta-D-galactosyl]-5-hydroxy-L-lysyl-[collagen] + H2O = (5R)-5-O-(beta-D-galactosyl)-5-hydroxy-L-lysyl-[collagen] + D-glucose. Its function is as follows. Catalyzes the hydrolysis of glucose from the disaccharide unit linked to hydroxylysine residues of collagen and collagen-like proteins. The protein is Protein-glucosylgalactosylhydroxylysine glucosidase of Danio rerio (Zebrafish).